The chain runs to 97 residues: UPF0213 protein YE0453 (97 aa).

The 76-residue stretch at Ser-4–Lys-79 folds into the GIY-YIG domain.

Belongs to the UPF0213 family.

This Yersinia enterocolitica serotype O:8 / biotype 1B (strain NCTC 13174 / 8081) protein is UPF0213 protein YE0453.